The sequence spans 337 residues: Phenylalanine--tRNA ligase alpha subunit (337 aa).

Position 252 (Glu-252) interacts with Mg(2+).

It belongs to the class-II aminoacyl-tRNA synthetase family. Phe-tRNA synthetase alpha subunit type 1 subfamily. In terms of assembly, tetramer of two alpha and two beta subunits. Requires Mg(2+) as cofactor.

It is found in the cytoplasm. The catalysed reaction is tRNA(Phe) + L-phenylalanine + ATP = L-phenylalanyl-tRNA(Phe) + AMP + diphosphate + H(+). The polypeptide is Phenylalanine--tRNA ligase alpha subunit (Francisella tularensis subsp. mediasiatica (strain FSC147)).